Consider the following 99-residue polypeptide: uncharacterized protein (99 aa).

An N-terminal signal peptide occupies residues 1–17; the sequence is MMMNAFFPAMALMVLVG. Cys18 carries the N-palmitoyl cysteine lipid modification. The S-diacylglycerol cysteine moiety is linked to residue Cys18.

The protein resides in the cell membrane. This is an uncharacterized protein from Shigella flexneri.